The primary structure comprises 412 residues: MTNYRVESSSGRAARKTRLALMGPAFIAAIGYIDPGNFATNIQAGASFGYQLLWVVVWANLMAMLIQILSAKLGIATGKNLAEQIRDHYPRPVVWFYWVQAEIIAMATDLAEFIGAAIGFKLILGVSLLQGAVLTGIATFLILMLQRRGQKPLEKVIGGLLLFVAAAYIVELIFSQPNLAQLGKGMVIPSLPTSEAVFLAAGVLGATIMPHVIYLHSSLTQHLHGGSRQQRYSATKWDVAIAMTIAGFVNLAMMATAAAAFHFSGHTGVADLDEAYLTLQPLLSHAAATVFGLSLVAAGLSSTVVGTLAGQVVMQGFIRFHIPLWVRRTVTMLPSFIVILMGLDPTRILVMSQVLLSFGIALALVPLLIFTSDSKLMGDLVNSKRVKQTGWVIVVLVVALNIWLLVGTALGL.

Residues 1–19 (MTNYRVESSSGRAARKTRL) are Cytoplasmic-facing. The chain crosses the membrane as a helical span at residues 20-39 (ALMGPAFIAAIGYIDPGNFA). Topologically, residues 40–51 (TNIQAGASFGYQ) are periplasmic. Residues 52-71 (LLWVVVWANLMAMLIQILSA) traverse the membrane as a helical segment. At 72–95 (KLGIATGKNLAEQIRDHYPRPVVW) the chain is on the cytoplasmic side. Residues 96–118 (FYWVQAEIIAMATDLAEFIGAAI) form a helical membrane-spanning segment. The Periplasmic segment spans residues 119-125 (GFKLILG). Residues 126–145 (VSLLQGAVLTGIATFLILML) form a helical membrane-spanning segment. The Cytoplasmic segment spans residues 146–155 (QRRGQKPLEK). A helical transmembrane segment spans residues 156–175 (VIGGLLLFVAAAYIVELIFS). The Periplasmic portion of the chain corresponds to 176–196 (QPNLAQLGKGMVIPSLPTSEA). Residues 197–220 (VFLAAGVLGATIMPHVIYLHSSLT) traverse the membrane as a helical segment. Residues 221–238 (QHLHGGSRQQRYSATKWD) lie on the Cytoplasmic side of the membrane. A helical membrane pass occupies residues 239–258 (VAIAMTIAGFVNLAMMATAA). Residues 259–276 (AAFHFSGHTGVADLDEAY) are Periplasmic-facing. Residues 277–297 (LTLQPLLSHAAATVFGLSLVA) traverse the membrane as a helical segment. Residues 298–327 (AGLSSTVVGTLAGQVVMQGFIRFHIPLWVR) are Cytoplasmic-facing. Residues 328 to 344 (RTVTMLPSFIVILMGLD) traverse the membrane as a helical segment. Residues 345-350 (PTRILV) are Periplasmic-facing. Residues 351-370 (MSQVLLSFGIALALVPLLIF) form a helical membrane-spanning segment. Topologically, residues 371–387 (TSDSKLMGDLVNSKRVK) are cytoplasmic. A helical transmembrane segment spans residues 388–406 (QTGWVIVVLVVALNIWLLV). Residues 407–412 (GTALGL) lie on the Periplasmic side of the membrane.

It belongs to the NRAMP family.

The protein localises to the cell inner membrane. Its function is as follows. H(+)-stimulated, divalent metal cation uptake system. This is Divalent metal cation transporter MntH from Escherichia coli O9:H4 (strain HS).